Reading from the N-terminus, the 261-residue chain is Class II histocompatibility antigen, M beta 1 chain (261 aa).

The first 18 residues, 1–18, serve as a signal peptide directing secretion; sequence MAALWLLLLVLSLHCMGA. Residues 19–112 are beta-1; the sequence is GGFVAHVEST…PFWNALTHRT (94 aa). At 19–218 the chain is on the lumenal side; the sequence is GGFVAHVEST…PGLSPIQTVK (200 aa). Disulfide bonds link C29–C97, C43–C53, and C135–C192. An N-linked (GlcNAc...) asparagine glycan is attached at N75. Residues 113–207 are beta-2; it reads RPPSVRVAQT…GTSEPIRGDW (95 aa). An Ig-like C1-type domain is found at 114–204; it reads PPSVRVAQTT…QHSGTSEPIR (91 aa). The tract at residues 208–218 is connecting peptide; the sequence is TPGLSPIQTVK. A helical membrane pass occupies residues 219–239; that stretch reads VSVSAATLGLGFIIFCVGFFR. Over 240–261 the chain is Cytoplasmic; the sequence is WRKSHSSSYTPLSGSTYPEGRH. The YXXZ motif motif lies at 248 to 251; the sequence is YTPL.

This sequence belongs to the MHC class II family. Heterodimer of an alpha chain (DMA) and a beta chain (DMB). Interacts with MHCII; this interaction mediates rapid selection of high-affinity peptides.

Its subcellular location is the late endosome membrane. It localises to the lysosome membrane. Plays a critical role in catalyzing the release of class II-associated invariant chain peptide (CLIP) from newly synthesized MHC class II molecules and freeing the peptide binding site for acquisition of antigenic peptides. This is Class II histocompatibility antigen, M beta 1 chain (H2-DMb1) from Mus musculus (Mouse).